We begin with the raw amino-acid sequence, 481 residues long: Regulator of G-protein signaling 1 (481 aa).

A disordered region spans residues 1 to 31; sequence MPALHNPSSPPPSYEAVTSYRNGNSIDSGDK. Residues 33–227 form a fungal-DR region; sequence QQCSRLMKIT…SVHEIGKSKN (195 aa). Positions 232-312 constitute a DEP domain; the sequence is PVYSVSSPSP…KGVSYFLTGK (81 aa). The RGS domain occupies 344 to 474; that stretch reads ILETILRKPN…AGDSLLKFLE (131 aa).

The protein localises to the nucleus. Its subcellular location is the cytoplasm. Functionally, negatively regulates pheromone signaling during mating. Acts in a negative feedback loop that is essential for the mating process. This loop acts to down-regulate cellular sensitivity to pheromone. Activated by ste11. The sequence is that of Regulator of G-protein signaling 1 (rgs1) from Schizosaccharomyces pombe (strain 972 / ATCC 24843) (Fission yeast).